Consider the following 554-residue polypeptide: Arginine--tRNA ligase (554 aa).

The short motif at 129–139 (ANPTGPLHIGH) is the 'HIGH' region element.

Belongs to the class-I aminoacyl-tRNA synthetase family. Monomer.

The protein resides in the cytoplasm. The catalysed reaction is tRNA(Arg) + L-arginine + ATP = L-arginyl-tRNA(Arg) + AMP + diphosphate. The chain is Arginine--tRNA ligase from Geobacter sp. (strain M21).